An 880-amino-acid polypeptide reads, in one-letter code: MLLILELLVLIIGLGVALPVQTHNLTDNQGFDEESSQWISPHYYPTPQGGRLQGVWQDAYTKAKALVSQMTIVEKVNLTTGTGWQLGPCVGNTGSVPRFGIPNLCLQDGPLGVRLTDFSTGYPSGMATGATFNKDLFLQRGQALGHEFNSKGVHIALGPAVGPLGVKARGGRNFEAFGSDPYLQGIAAAATIKGLQENNVMACVKHFIGNEQDIYRQPSNSKVDPEYDPATKESISANIPDRAMHELYLWPFADSIRAGVGSVMCSYNRVNNTYSCENSYMINHLLKEELGFQGFVVSDWAAQMSGAYSAISGLDMSMPGELLGGWNTGKSYWGQNLTKAVYNETVPIERLDDMATRILAALYATNSFPTKDRLPNFSSFTTKEYGNEFFVDKTSPVVKVNHFVDPSNDFTEDTALKVAEESIVLLKNEKNTLPISPNKVRKLLLSGIAAGPDPKGYECSDQSCVDGALFEGWGSGSVGYPKYQVTPFEEISANARKNKMQFDYIRESFDLTQVSTVASDAHMSIVVVSAVSGEGYLIIDGNRGDKNNVTLWHNSDNLIKAVAENCANTVVVITSTGQVDVESFADHPNVTAIVWAGPLGDRSGTAIANILFGNANPSGHLPFTVAKSNDDYIPIVTYNPPNGEPEDNTLAEHDLLVDYRYFEEKNIEPRYAFGYGLSYNEYKVSNAKVSAAKKVDEELPQPKLYLAEYSYNKTEEINNPEDAFFPSNARRIQEFLYPYLDSNVTLKDGNYEYPDGYSTEQRTTPIQPGGGLGGNDALWEVAYKVEVDVQNLGNSTDKFVPQLYLKHPEDGKFETPVQLRGFEKVELSPGEKKTVEFELLRRDLSVWDTTRQSWIVESGTYEALIGVAVNDIKTSVLFTI.

A signal peptide spans 1 to 17; it reads MLLILELLVLIIGLGVA. Residues Asn-24, Asn-77, and Asn-271 are each glycosylated (N-linked (GlcNAc...) asparagine). Residue Asp-299 is part of the active site. N-linked (GlcNAc...) asparagine glycosylation is found at Asn-336, Asn-343, Asn-376, Asn-548, Asn-589, Asn-712, Asn-743, and Asn-794.

This sequence belongs to the glycosyl hydrolase 3 family.

It catalyses the reaction Hydrolysis of terminal, non-reducing beta-D-glucosyl residues with release of beta-D-glucose.. It functions in the pathway glycan metabolism; cellulose degradation. The polypeptide is Beta-glucosidase 2 (BGL2) (Saccharomycopsis fibuligera (Yeast)).